The following is an 839-amino-acid chain: ABC transporter A family member 7 (839 aa).

Helical transmembrane passes span 30 to 50 (GVQI…KLWI), 238 to 258 (IASL…LPLF), 286 to 306 (IMTF…ISLI), 321 to 341 (FALF…AFFL), 352 to 372 (SIFG…LSLF), 378 to 398 (VFYY…LCGL), and 419 to 439 (ILFW…YLDK). Positions 525 to 756 (LIVQGLRKQF…FGDGYSVRID (232 aa)) constitute an ABC transporter domain. 559–566 (GPNGAGKT) serves as a coordination point for ATP.

Belongs to the ABC transporter superfamily. ABCA family.

The protein resides in the membrane. The polypeptide is ABC transporter A family member 7 (abcA7) (Dictyostelium discoideum (Social amoeba)).